The chain runs to 72 residues: Translation initiation factor IF-1 (72 aa).

Positions 1-72 (MAKDDVIQMQ…SRARIVFRAK (72 aa)) constitute an S1-like domain.

The protein belongs to the IF-1 family. Component of the 30S ribosomal translation pre-initiation complex which assembles on the 30S ribosome in the order IF-2 and IF-3, IF-1 and N-formylmethionyl-tRNA(fMet); mRNA recruitment can occur at any time during PIC assembly.

The protein resides in the cytoplasm. Functionally, one of the essential components for the initiation of protein synthesis. Stabilizes the binding of IF-2 and IF-3 on the 30S subunit to which N-formylmethionyl-tRNA(fMet) subsequently binds. Helps modulate mRNA selection, yielding the 30S pre-initiation complex (PIC). Upon addition of the 50S ribosomal subunit IF-1, IF-2 and IF-3 are released leaving the mature 70S translation initiation complex. This chain is Translation initiation factor IF-1, found in Burkholderia mallei (strain NCTC 10247).